A 458-amino-acid polypeptide reads, in one-letter code: ATP synthase subunit beta (458 aa).

Position 148–155 (148–155 (GGAGVGKT)) interacts with ATP.

The protein belongs to the ATPase alpha/beta chains family. In terms of assembly, F-type ATPases have 2 components, CF(1) - the catalytic core - and CF(0) - the membrane proton channel. CF(1) has five subunits: alpha(3), beta(3), gamma(1), delta(1), epsilon(1). CF(0) has three main subunits: a(1), b(2) and c(9-12). The alpha and beta chains form an alternating ring which encloses part of the gamma chain. CF(1) is attached to CF(0) by a central stalk formed by the gamma and epsilon chains, while a peripheral stalk is formed by the delta and b chains.

Its subcellular location is the cell inner membrane. It carries out the reaction ATP + H2O + 4 H(+)(in) = ADP + phosphate + 5 H(+)(out). Produces ATP from ADP in the presence of a proton gradient across the membrane. The catalytic sites are hosted primarily by the beta subunits. The chain is ATP synthase subunit beta from Pseudomonas putida (strain ATCC 700007 / DSM 6899 / JCM 31910 / BCRC 17059 / LMG 24140 / F1).